The following is a 338-amino-acid chain: Cap-specific mRNA (nucleoside-2'-O-)-methyltransferase (338 aa).

Tyrosine 22 contacts mRNA. Residues glutamine 39, tyrosine 66, glycine 68, glycine 72, aspartate 95, arginine 97, valine 116, and aspartate 138 each coordinate S-adenosyl-L-methionine. Positions proline 169–isoleucine 249 are binding to NPH-I. A binding to Rap94 region spans residues proline 169–lysine 333. Lysine 175 serves as the catalytic For methyltransferase activity. MRNA is bound by residues arginine 177–phenylalanine 180, aspartate 182, serine 205–glutamate 207, and glutamate 233. Residues histidine 305–threonine 338 are disordered. Residues arginine 323–threonine 338 show a composition bias toward basic residues.

This sequence belongs to the class I-like SAM-binding methyltransferase superfamily. Poxvirus/kinetoplastid 2'-O-MTase family. In terms of assembly, interacts with poly(A) polymerase catalytic subunit OPG063. Interacts with OPG109 and OPG123; these interactions might help linking transcription to capping and polyadenylation.

Its subcellular location is the virion. It catalyses the reaction a 5'-end (N(7)-methyl 5'-triphosphoguanosine)-ribonucleoside in mRNA + S-adenosyl-L-methionine = a 5'-end (N(7)-methyl 5'-triphosphoguanosine)-(2'-O-methyl-ribonucleoside) in mRNA + S-adenosyl-L-homocysteine + H(+). In terms of biological role, displays methyltransferase, positive regulation of the poly(A) polymerase and transcription elongation activities. Involved in the modification of both mRNA ends and in intermediate and late gene positive transcription elongation. At the mRNAs 5' end, methylates the ribose 2' OH group of the first transcribed nucleotide, thereby producing a 2'-O-methylpurine cap. At the 3' end, functions as a processivity factor which stimulates the activity of the viral poly(A) polymerase OPG063 that creates mRNA's poly(A) tail. In the presence of OPG102, OPG063 does not dissociate from the RNA allowing tail elongation to around 250 adenylates. This is Cap-specific mRNA (nucleoside-2'-O-)-methyltransferase (OPG102) from Oryctolagus cuniculus (Rabbit).